Consider the following 351-residue polypeptide: Cytoplasmic dynein 2 light intermediate chain 1 (351 aa).

It belongs to the dynein light intermediate chain family. Light intermediate chain of the cytoplasmic dynein complex 2, a multisubunit complex composed at least of eleven different proteins. The cytoplasmic dynein 2 complex consists of two catalytic heavy chains (HCs) and a number of non-catalytic subunits presented by intermediate chains (ICs), light intermediate chains (LICs) and light chains (LCs). Among them, a heavy chain (DYNC2H1), two intermediate chains (DYNC2I2 and DYNC2I1), a light intermediate chain (DYNC2LI1), and a light chain (DYNLT2B) are unique to the dynein-2 complex, but a subset of light chains are also shared by dynein-1 and dynein-2 complexes. Dynein-2 complex is built around two copies of cytoplasmic dynein 2 heavy chain 1 (DYNC2H1). The C-terminal region of DYNC2H1 forms the motor domain, which converts the energy from ATP hydrolysis into movement. Its N-terminal region forms the tail, an extended structure that binds the other subunits and holds the two heavy chains in a homodimer. Interacts with DYNC2H1 (via N-terminus); this interaction stabilizes the dynein-2 complex structure. Expressed in bone, brain, kidney, and cartilage. Lower expression in heart, liver, lung, placenta and thymus.

The protein localises to the golgi apparatus. The protein resides in the cytoplasm. It is found in the cell projection. Its subcellular location is the cilium. It localises to the cytoskeleton. The protein localises to the cilium basal body. The protein resides in the cilium axoneme. It is found in the microtubule organizing center. Its subcellular location is the centrosome. Acts as one of several non-catalytic accessory components of the cytoplasmic dynein 2 complex (dynein-2 complex), a motor protein complex that drives the movement of cargos along microtubules within cilia and flagella in concert with the intraflagellar transport (IFT) system, facilitating the assembly of these organelles. Involved in the regulation of ciliary length. The protein is Cytoplasmic dynein 2 light intermediate chain 1 (DYNC2LI1) of Homo sapiens (Human).